The sequence spans 143 residues: Fluoride-specific ion channel FluC 1 (143 aa).

The next 4 helical transmembrane spans lie at 13–33, 42–62, 80–100, and 111–131; these read VLVGLVFLGGCLGTLIRSVIA, GVPWGTLAINLVGAFVLATLL, LCIGTGLLGGFTTYSALTVEA, and WGIAYLLTSVAAGALLAWVVI. Na(+) is bound by residues Gly88 and Thr91.

It belongs to the fluoride channel Fluc/FEX (TC 1.A.43) family.

It localises to the cell membrane. It catalyses the reaction fluoride(in) = fluoride(out). With respect to regulation, na(+) is not transported, but it plays an essential structural role and its presence is essential for fluoride channel function. Functionally, fluoride-specific ion channel. Important for reducing fluoride concentration in the cell, thus reducing its toxicity. This Cutibacterium acnes (strain DSM 16379 / KPA171202) (Propionibacterium acnes) protein is Fluoride-specific ion channel FluC 1.